The sequence spans 139 residues: D-ribose pyranase (139 aa).

H20 (proton donor) is an active-site residue. Substrate is bound by residues D28, H106, and 128–130 (YAN).

This sequence belongs to the RbsD / FucU family. RbsD subfamily. In terms of assembly, homodecamer.

The protein resides in the cytoplasm. It catalyses the reaction beta-D-ribopyranose = beta-D-ribofuranose. It participates in carbohydrate metabolism; D-ribose degradation; D-ribose 5-phosphate from beta-D-ribopyranose: step 1/2. Catalyzes the interconversion of beta-pyran and beta-furan forms of D-ribose. This Proteus mirabilis (strain HI4320) protein is D-ribose pyranase.